A 128-amino-acid polypeptide reads, in one-letter code: MSLCSACTSPASHQLLLNCQGQTVAKSHSSADAGVSLVSGRWCAWWPEHCSESMFPSQHPVLSSNLADSSGQGRSPAGAHPALCPFHKSPWFPHFPQILPREWSWCGPERPAGCSLGLKAEAALVGKK.

This is an uncharacterized protein from Homo sapiens (Human).